A 144-amino-acid chain; its full sequence is Flagellar assembly factor FliW (144 aa).

It belongs to the FliW family. As to quaternary structure, interacts with translational regulator CsrA and flagellin(s).

The protein resides in the cytoplasm. In terms of biological role, acts as an anti-CsrA protein, binds CsrA and prevents it from repressing translation of its target genes, one of which is flagellin. Binds to flagellin and participates in the assembly of the flagellum. The polypeptide is Flagellar assembly factor FliW (Bacillus pumilus (strain SAFR-032)).